We begin with the raw amino-acid sequence, 564 residues long: Quinone-dependent D-lactate dehydrogenase (564 aa).

The 172-residue stretch at 36–207 folds into the FAD-binding PCMH-type domain; the sequence is GTGNALAVVR…TNLQEKRYQV (172 aa). FAD is bound by residues 70–74, 78–79, Gly137, Ser144, Gly154, and Val256; these read AANTG and GS.

Belongs to the quinone-dependent D-lactate dehydrogenase family. FAD serves as cofactor.

It localises to the cell inner membrane. The enzyme catalyses (R)-lactate + a quinone = a quinol + pyruvate. Its function is as follows. Catalyzes the oxidation of D-lactate to pyruvate. In Haemophilus influenzae (strain ATCC 51907 / DSM 11121 / KW20 / Rd), this protein is Quinone-dependent D-lactate dehydrogenase.